A 117-amino-acid chain; its full sequence is Transcription elongation factor SPT4 (117 aa).

A2 carries the N-acetylalanine modification. Residues 2-40 (ALETVPKDLRHLRACLLCSLVKTIDQFEYDGCDNCDAYL) form an interaction with SUPT5H region. Zn(2+)-binding residues include C16, C19, C33, and C36. A C4-type zinc finger spans residues 16–36 (CLLCSLVKTIDQFEYDGCDNC).

This sequence belongs to the SPT4 family. Interacts with SUPT5H to form DSIF. DSIF interacts with the positive transcription elongation factor b complex (P-TEFb complex), which is composed of CDK9 and cyclin-T (CCNT1 or CCNT2). DSIF interacts with RNA polymerase II, and this interaction is reduced by phosphorylation of the C-terminal domain (CTD) of POLR2A by P-TEFb. DSIF also interacts with the NELF complex, which is composed of NELFA, NELFB, NELFD and NELFE, and this interaction occurs following prior binding of DSIF to RNA polymerase II. DSIF also interacts with PRMT1/HRMT1L2, TATSF1, RNGTT/CAP1A, PRMT5/SKB1, SUPT6H, and can interact with PIN1. Post-translationally, ubiquitinated by UBR5 when not assembled in the DSIF complex, leading to its degradation: UBR5 recognizes and binds a degron that is not accessible when SUPT4H1 is part of the DSIF complex.

Its subcellular location is the nucleus. Component of the DRB sensitivity-inducing factor complex (DSIF complex), which regulates mRNA processing and transcription elongation by RNA polymerase II. DSIF positively regulates mRNA capping by stimulating the mRNA guanylyltransferase activity of RNGTT/CAP1A. DSIF also acts cooperatively with the negative elongation factor complex (NELF complex) to enhance transcriptional pausing at sites proximal to the promoter. Transcriptional pausing may facilitate the assembly of an elongation competent RNA polymerase II complex. DSIF and NELF promote pausing by inhibition of the transcription elongation factor TFIIS/S-II. TFIIS/S-II binds to RNA polymerase II at transcription pause sites and stimulates the weak intrinsic nuclease activity of the enzyme. Cleavage of blocked transcripts by RNA polymerase II promotes the resumption of transcription from the new 3' terminus and may allow repeated attempts at transcription through natural pause sites. The sequence is that of Transcription elongation factor SPT4 (SUPT4H1) from Pongo abelii (Sumatran orangutan).